The chain runs to 457 residues: Argininosuccinate lyase (457 aa).

Belongs to the lyase 1 family. Argininosuccinate lyase subfamily.

Its subcellular location is the cytoplasm. The catalysed reaction is 2-(N(omega)-L-arginino)succinate = fumarate + L-arginine. It participates in amino-acid biosynthesis; L-arginine biosynthesis; L-arginine from L-ornithine and carbamoyl phosphate: step 3/3. The chain is Argininosuccinate lyase from Yersinia pseudotuberculosis serotype O:3 (strain YPIII).